Here is a 428-residue protein sequence, read N- to C-terminus: Dihydroorotase (428 aa).

Zn(2+) is bound by residues His59 and His61. Substrate-binding positions include His61 to Arg63 and Asn93. Positions 151, 178, and 231 each coordinate Zn(2+). Asn277 is a binding site for substrate. Residue Asp304 coordinates Zn(2+). Asp304 is a catalytic residue. Substrate is bound by residues His308 and Phe322–Gly323.

The protein belongs to the metallo-dependent hydrolases superfamily. DHOase family. Class I DHOase subfamily. Zn(2+) serves as cofactor.

The catalysed reaction is (S)-dihydroorotate + H2O = N-carbamoyl-L-aspartate + H(+). It functions in the pathway pyrimidine metabolism; UMP biosynthesis via de novo pathway; (S)-dihydroorotate from bicarbonate: step 3/3. Its function is as follows. Catalyzes the reversible cyclization of carbamoyl aspartate to dihydroorotate. This is Dihydroorotase from Bacillus cereus (strain AH187).